The sequence spans 147 residues: Large ribosomal subunit protein bL9 (147 aa).

This sequence belongs to the bacterial ribosomal protein bL9 family.

Functionally, binds to the 23S rRNA. In Mycoplasmoides gallisepticum (strain R(low / passage 15 / clone 2)) (Mycoplasma gallisepticum), this protein is Large ribosomal subunit protein bL9.